A 335-amino-acid chain; its full sequence is Nucleoid-associated protein PP_0973 (335 aa).

It belongs to the YejK family.

It localises to the cytoplasm. It is found in the nucleoid. The protein is Nucleoid-associated protein PP_0973 of Pseudomonas putida (strain ATCC 47054 / DSM 6125 / CFBP 8728 / NCIMB 11950 / KT2440).